The primary structure comprises 495 residues: UDP-glycosyltransferase 73C5 (495 aa).

Residues 146–162 (ILFHGMGCFCLLCMHVL) traverse the membrane as a helical segment. UDP-alpha-D-glucose is bound by residues S296, 356-358 (SPQ), 373-381 (HCGWNSTLE), and 395-398 (FADQ). Residues 446–477 (MGESDDAKERRRRAKELGDSAHKAVEEGGSSH) form a disordered region. The span at 450-471 (DDAKERRRRAKELGDSAHKAVE) shows a compositional bias: basic and acidic residues.

It belongs to the UDP-glycosyltransferase family. As to expression, elongating hypocotyls and root-specific. Expressed in the vascular system, in meristematic tissues of the root tip, and in the vasculature of the hypocotyl right after germination. In late stage of flower development, expressed in petals, and in abscission zones.

The protein localises to the membrane. Functionally, specifically catalyzes 23-O-glucosylation of brassinosteroids, resulting probably in their inactivation. Also, involved in the O-glucosylation of trans-zeatin and dihydrozeatin. Active in vitro on cis-zeatin, dihydrozeatin-9-N-Glc, and olomoucine. Also involved in the detoxification of the Fusarium mycotoxin deoxynivalenol by the transfer of glucose from UDP-glucose to the hydroxyl group at C-3. Possesses low quercetin 7-O-glucosyltransferase and 4'-O-glucosyltransferase activities in vitro. The chain is UDP-glycosyltransferase 73C5 (UGT73C5) from Arabidopsis thaliana (Mouse-ear cress).